A 122-amino-acid polypeptide reads, in one-letter code: MPTLQQLIRFGRQQVMVRPKSAALKRCPQRRGVCVKVYTTTPKKPNSALRKVARVKLTSGYEVTAYIPGIGHNLQEHSVVLVRGGRVKDLPGVRYHIIRGALDTAGVKNRVRSRSKYGVKKA.

It belongs to the universal ribosomal protein uS12 family. In terms of assembly, part of the 30S ribosomal subunit.

The protein localises to the plastid. Its subcellular location is the chloroplast. Functionally, with S4 and S5 plays an important role in translational accuracy. Located at the interface of the 30S and 50S subunits. The chain is Small ribosomal subunit protein uS12c (rps12) from Cyanidioschyzon merolae (strain NIES-3377 / 10D) (Unicellular red alga).